Reading from the N-terminus, the 203-residue chain is Ribosomal RNA small subunit methyltransferase G (203 aa).

S-adenosyl-L-methionine contacts are provided by residues G73, L78, V124–E125, and R138.

The protein belongs to the methyltransferase superfamily. RNA methyltransferase RsmG family.

It is found in the cytoplasm. The catalysed reaction is guanosine(527) in 16S rRNA + S-adenosyl-L-methionine = N(7)-methylguanosine(527) in 16S rRNA + S-adenosyl-L-homocysteine. In terms of biological role, specifically methylates the N7 position of guanine in position 527 of 16S rRNA. The sequence is that of Ribosomal RNA small subunit methyltransferase G from Glaesserella parasuis serovar 5 (strain SH0165) (Haemophilus parasuis).